The chain runs to 530 residues: MSKMASSIFATFSLLSSLLPTSLASSDANYEDFLQCLDLYSQNSIPVYTRNTSSYTSILESTIKNLVFLSPTTPKPNFIVTPMQESHVQTSVICCRMHGLQMRIRSGGHDFEGLSYVSNVPFVVLDLIHLKTINVDIEENSAWVQTGATIGELYYRIAEKVGVHAFPAGLCPTVGVGGHISGAGYGVLMRKYGVSADHVIDARIVNVDGEILDRESMGEDLFWAIRGGGGASFGVILAWKIRLVPVPPTVTIFIVPKTLEEGATALLHKWQFIGDNVHEDLFIGLSMRSVIISPKGDKTILVSFIGLFLGGSDKLVQHMEQSFPELGVKPHDCIEMSWIKSTVVFGVFSNDASLSVLLDRKNPFPPKSYHKVKSDYVTEPLPISVLEGICHRFLKNGVNKAEIIMSPYGGRMNEISESEIAFPHRKGNLYKINYIAEWEEAGSMENHLSWIRELYRYMTPYVSKSPRSSYLNFKDIDLGQTKNGTATYSQAKAWGSKYFKNNFKRLMQVKTKVDPNNFFCNEQGIPPFSS.

The first 24 residues, Met1–Ala24, serve as a signal peptide directing secretion. Residues Cys36 and Cys94 are joined by a disulfide bond. The N-linked (GlcNAc...) asparagine glycan is linked to Asn51. The FAD-binding PCMH-type domain maps to Thr72–Val246. Residues His109–Cys171 constitute a cross-link (6-(S-cysteinyl)-8alpha-(pros-histidyl)-FAD (His-Cys)). Asn483 carries an N-linked (GlcNAc...) asparagine glycan.

The protein belongs to the oxygen-dependent FAD-linked oxidoreductase family. FAD is required as a cofactor. Post-translationally, the FAD cofactor is bound via a bicovalent 6-S-cysteinyl, 8alpha-N1-histidyl FAD linkage.

The catalysed reaction is (S)-canadine + 2 O2 + H(+) = berberine + 2 H2O2. Catalyzes the oxidation of different tetrahydroprotoberberines, such as (S)-canadine, (S)-scoulerine and (S)-corypalmine. Catalyzes the oxidation of (S)-coreximine and (S)-tetrahydropalmatine. Catalyzes the oxidation of different 1-benzylisoquinoline alkaloids, such as (S)-norreticuline, (S)-nororientaline, (S)-coclaurine and (S)-norisoorientaline. Exhibits strict specificity for the (S)-enantiomer of tetrahydroprotoberbirines and 1-benzylisoquinoline alkaloids. This chain is Tetrahydroberberine oxidase, found in Berberis wilsoniae (Mrs Wilson's barberry).